Consider the following 423-residue polypeptide: UDP-N-acetylglucosamine 1-carboxyvinyltransferase 1 (423 aa).

24-25 provides a ligand contact to phosphoenolpyruvate; sequence KN. R94 serves as a coordination point for UDP-N-acetyl-alpha-D-glucosamine. C118 (proton donor) is an active-site residue. C118 is modified (2-(S-cysteinyl)pyruvic acid O-phosphothioketal). Residues 123–127, D309, and I331 each bind UDP-N-acetyl-alpha-D-glucosamine; that span reads RPIDQ.

It belongs to the EPSP synthase family. MurA subfamily.

The protein localises to the cytoplasm. The enzyme catalyses phosphoenolpyruvate + UDP-N-acetyl-alpha-D-glucosamine = UDP-N-acetyl-3-O-(1-carboxyvinyl)-alpha-D-glucosamine + phosphate. It participates in cell wall biogenesis; peptidoglycan biosynthesis. Cell wall formation. Adds enolpyruvyl to UDP-N-acetylglucosamine. The chain is UDP-N-acetylglucosamine 1-carboxyvinyltransferase 1 from Staphylococcus haemolyticus (strain JCSC1435).